The sequence spans 404 residues: MSSGALFPSLVPGSRGSSSKYLVEFRAGKMSLKGSTVTPDKRKGLVYIQQTDDSLIHFCWKDRTSGSVDDDLIIFPDDCEFKRVSQCTTGRVYVLKFKAGSKRLFFWMQEPKTDKDEEHCRKVNEYLNNPPMPGALGGSGSGSHELSALGGEGGLQSLLGNMSHNQLMQLIGPTGLGGLGGLGALTGPGLASLLGSGGPTTSSSSSSSRSQSAAVTPSSTTSSTRTTSAPVAPAAAPATTPSPAVSSNDGASAATSPTQAIQLSDLQNILATMNVPATGEGGQQVDLASVLTPEIMAPILANAEVQERLMPYLPSGESLPQTADEIQNTLTSPQFQQALSMFSAALASGQLGPLMSQFGLPADAVDAANKGDIEAFAKAMQSTSSQKERESSEKKEEEEDMSLD.

A Pru domain is found at 17–130; that stretch reads SSSKYLVEFR…RKVNEYLNNP (114 aa). Disordered regions lie at residues 128-149, 195-258, and 376-404; these read NNPP…LSAL, GSGG…TSPT, and FAKA…MSLD. The span at 195-247 shows a compositional bias: low complexity; it reads GSGGPTTSSSSSSSRSQSAAVTPSSTTSSTRTTSAPVAPAAAPATTPSPAVSS. Polar residues predominate over residues 248-258; it reads NDGASAATSPT. Positions 278–390 constitute a DEUBAD domain; it reads TGEGGQQVDL…QSTSSQKERE (113 aa). A compositionally biased stretch (basic and acidic residues) spans 386-395; it reads QKERESSEKK.

The protein belongs to the ADRM1 family. In terms of assembly, component of the 19S proteasome regulatory particle complex. The 26S proteasome consists of a 20S core particle (CP) and two 19S regulatory subunits (RP).

The protein resides in the cytoplasm. It is found in the nucleus. In terms of biological role, component of the 26S proteasome, a multiprotein complex involved in the ATP-dependent degradation of ubiquitinated proteins. This complex plays a key role in the maintenance of protein homeostasis by removing misfolded or damaged proteins, which could impair cellular functions, and by removing proteins whose functions are no longer required. Therefore, the proteasome participates in numerous cellular processes, including cell cycle progression, apoptosis, or DNA damage repair. Within the complex, functions as a proteasomal ubiquitin receptor. The sequence is that of Proteasomal ubiquitin receptor ADRM1-B (adrm1-b) from Xenopus laevis (African clawed frog).